The following is a 251-amino-acid chain: Membrane-anchored junction protein (251 aa).

Residues 1-227 (MSLKPFTYPF…HSNPPPLKEP (227 aa)) lie on the Nuclear side of the membrane. Residues 140–225 (RKRKLMEEPS…LEHSNPPPLK (86 aa)) form a disordered region. Over residues 183 to 198 (EDSQQDTPASDSTAVT) the composition is skewed to polar residues. Residues 228–246 (AARGFLGFLSALFPFRYFF) form a helical membrane-spanning segment. The Perinuclear space segment spans residues 247-251 (RKSTQ).

It belongs to the MAJIN family. In terms of assembly, component of the MAJIN-TERB1-TERB2 complex, composed of MAJIN, TERB1 and TERB2.

It is found in the nucleus inner membrane. The protein resides in the chromosome. The protein localises to the telomere. Meiosis-specific telomere-associated protein involved in meiotic telomere attachment to the nucleus inner membrane, a crucial step for homologous pairing and synapsis. Component of the MAJIN-TERB1-TERB2 complex, which promotes telomere cap exchange by mediating attachment of telomeric DNA to the inner nuclear membrane and replacement of the protective cap of telomeric chromosomes: in early meiosis, the MAJIN-TERB1-TERB2 complex associates with telomeric DNA and the shelterin/telosome complex. During prophase, the complex matures and promotes release of the shelterin/telosome complex from telomeric DNA. In the complex, MAJIN acts as the anchoring subunit to the nucleus inner membrane. MAJIN shows DNA-binding activity, possibly for the stabilization of telomere attachment on the nucleus inner membrane. This chain is Membrane-anchored junction protein, found in Rattus norvegicus (Rat).